The chain runs to 418 residues: AA11 family lytic polysaccharide monooxygenase B (418 aa).

The first 21 residues, 1 to 21 (MMFSKSGLVAVAMLGASAVEA), serve as a signal peptide directing secretion. Cu(+)-binding residues include His-22 and His-82. Cystine bridges form between Cys-50–Cys-165, Cys-87–Cys-113, and Cys-206–Cys-240. Residues Asn-120 and Asn-134 are each glycosylated (N-linked (GlcNAc...) asparagine). The disordered stretch occupies residues 226 to 345 (DGNPSNLQPA…SSSSSNGALT (120 aa)). Residues 254-345 (SPSTPSTSSS…SSSSSNGALT (92 aa)) show a composition bias toward low complexity.

The protein belongs to the polysaccharide monooxygenase AA11 family. Cu(2+) is required as a cofactor.

The protein localises to the secreted. Lytic polysaccharide monooxygenase (LPMO)-like protein that acts as a strict peroxygenase and does not catalyze a monooxygenase reaction. It is indeed hardly active on chitin, while being very active on soluble oligomers of N-acetylglucosamine. Cleaves the glycosidic bonds byoxidizing the C1 position. Also unable to oxidize cellopentaose. Probably breaks glycosidic bonds in non-polymeric substrates possibly carbohydrates in the cell wall of the fungus or its competitors. In the presence of chitotetraose, the enzyme can withstand considerable amounts of H(2)O(2), which it uses to efficiently and stoichiometrically convert this substrate. This Aspergillus fumigatus (strain ATCC MYA-4609 / CBS 101355 / FGSC A1100 / Af293) (Neosartorya fumigata) protein is AA11 family lytic polysaccharide monooxygenase B.